The chain runs to 1567 residues: Transmembrane protein 131 homolog (1567 aa).

The first 32 residues, 1-32 (MPTQVQMRPLLRIFAEPILLILIFLFTLGAKG), serve as a signal peptide directing secretion. At 33–1049 (EKVLQETFLG…RPGWESSLKN (1017 aa)) the chain is on the lumenal side. The interval 55–228 (RLVPSRLDFG…TLKPVIRISF (174 aa)) is papD-L domain. N-linked (GlcNAc...) asparagine glycans are attached at residues N84, N114, N168, N235, N316, N317, N342, N372, N409, N462, N563, N890, and N1013. Residues 1050–1070 (AALVVLLASFGLVLVAAVFDA) form a helical membrane-spanning segment. Residues 1071 to 1567 (KAIMVQQNAY…SQRNNHNHMN (497 aa)) are Cytoplasmic-facing. Positions 1096 to 1130 (RNIVKLQAEEAAAKAESVQQQQKVKNGQLKELRKR) form a coiled coil. Disordered stretches follow at residues 1112–1337 (SVQQ…SPDA), 1364–1386 (PTDNGFDWNHATSSSDLGPIGDN), and 1502–1567 (PGLE…NHMN). 2 stretches are compositionally biased toward low complexity: residues 1132 to 1150 (VVNSTNSKSKSKSSWSPWS) and 1166 to 1183 (KTVVSTPVTPPAASAPAA). 2 positions are modified to phosphoserine: S1201 and S1258. Polar residues predominate over residues 1247–1259 (AKSSPPQQENISP). A compositionally biased stretch (basic and acidic residues) spans 1284-1298 (PGRERERERRSKDQK). Residues 1319–1331 (KLNFGQTTNSTSP) are compositionally biased toward polar residues. Polar residues-rich tracts occupy residues 1507-1519 (SARQTHNLAQEQV) and 1536-1561 (LPTQYDPFTSPSSIWSDTWRQSSQRN).

This sequence belongs to the TMEM131 family. As to quaternary structure, may interact (via PapD-L domain) with collagen proteins (via C-terminus); the interaction is direct and is involved in assembly and TRAPPIII ER-to-Golgi transport complex-dependent secretion of collagen.

Its subcellular location is the membrane. Collagen binding transmembrane protein involved in collagen secretion, probably by recruiting the ER-to-Golgi transport complex TRAPPIII. This is Transmembrane protein 131 homolog from Drosophila melanogaster (Fruit fly).